The primary structure comprises 387 residues: MNRLRYLTAGESHGPSLTAIIEGMPANLELNEGDINRDLARRQLGYGRGGRMLIEKDKVNFTSGVRWGKTLGSPITLSIQNRDWENWGKKMSPVAEDFVEGMAITHPRPGHADLTGVIKYRQDDARNILERSSARETAARVAVGALCKKFLADLGMSVLGYVSELGGVCADASLEDYHERFALSEESPCRTFDAEAEQRMIKAIDRAKEDGDSLGGVVEVAVLGAPVGLGSYVQWDRRLDGRLAYAMMSIQAFKGVEIGLGFEAGRRPGSQVHDEIFHQGDEFVRKTNRAGGLEGGMTNGAPIIVRGAMKPIPTLYQPLQTVDFRTKDAFAAVVERSDVCAVPAAAVVAEAVVAIEMAQAMLEKFGGDAMEEVKQNLQAYGEYVQRF.

2 residues coordinate NADP(+): arginine 42 and arginine 48. Residues 131 to 133 (RSS), 251 to 252 (QA), glycine 295, 310 to 314 (KPIPT), and arginine 336 contribute to the FMN site.

The protein belongs to the chorismate synthase family. Homotetramer. It depends on FMNH2 as a cofactor.

It carries out the reaction 5-O-(1-carboxyvinyl)-3-phosphoshikimate = chorismate + phosphate. The protein operates within metabolic intermediate biosynthesis; chorismate biosynthesis; chorismate from D-erythrose 4-phosphate and phosphoenolpyruvate: step 7/7. Its function is as follows. Catalyzes the anti-1,4-elimination of the C-3 phosphate and the C-6 proR hydrogen from 5-enolpyruvylshikimate-3-phosphate (EPSP) to yield chorismate, which is the branch point compound that serves as the starting substrate for the three terminal pathways of aromatic amino acid biosynthesis. This reaction introduces a second double bond into the aromatic ring system. The sequence is that of Chorismate synthase from Syntrophotalea carbinolica (strain DSM 2380 / NBRC 103641 / GraBd1) (Pelobacter carbinolicus).